Consider the following 152-residue polypeptide: Protein SprT-like (152 aa).

Residues 7-148 form the SprT-like domain; it reads QRLVEEVSLQ…GKCKGKLNLI (142 aa). H67 lines the Zn(2+) pocket. Residue E68 is part of the active site. H71 contacts Zn(2+).

This sequence belongs to the SprT family. Zn(2+) is required as a cofactor.

The protein resides in the cytoplasm. This chain is Protein SprT-like, found in Bacillus cereus (strain 03BB102).